The sequence spans 1312 residues: Rho GTPase-activating protein gacG (1312 aa).

6 disordered regions span residues 52–74 (VENNNNNNNNNNNSENNKYKRSQ), 111–158 (SNNN…SSSD), 314–519 (ISSS…PRNF), 762–831 (NSIS…SSTG), 1185–1230 (NNNN…SSSV), and 1282–1312 (TGTSETSIHSSNSPISSSISRSPSLTDIVEE). 2 stretches are compositionally biased toward low complexity: residues 53 to 67 (ENNNNNNNNNNNSEN) and 111 to 146 (SNNNNSSNSSCNSTPSTSPSSTPRSTNSPRSTYSPR). The span at 147–158 (NNNNNFTESSSD) shows a compositional bias: polar residues. Composition is skewed to low complexity over residues 328 to 355 (TTAAATGSSLSNSNSNSNLQNSQSANNS), 373 to 397 (HHSSLTHSNSNSNLISTNTSSIGNS), and 414 to 436 (LNLTENNLNNSSSTSSSPRNNGN). Positions 437–449 (EVIQSSSSTSSPR) are enriched in polar residues. The segment covering 479-507 (SSTNSLNNSTSSLKSSNNNILQQQQQQQQ) has biased composition (low complexity). Polar residues-rich tracts occupy residues 508 to 518 (HYDSAPTTPRN) and 763 to 776 (SISTNPLTNSGNIA). The segment covering 792-816 (NNNNNNNNNNNNNNNNNNNNNNNNN) has biased composition (low complexity). The Rho-GAP domain occupies 1030–1212 (SKIDPITGFN…HHNSHHHRDN (183 aa)). A compositionally biased stretch (basic residues) spans 1196–1210 (HHHHHHHHHNSHHHR). 2 stretches are compositionally biased toward low complexity: residues 1213-1222 (NNNNSNNNSS) and 1282-1305 (TGTSETSIHSSNSPISSSISRSPS).

The protein resides in the cytoplasm. Its function is as follows. Rho GTPase-activating protein involved in the signal transduction pathway. The polypeptide is Rho GTPase-activating protein gacG (gacG) (Dictyostelium discoideum (Social amoeba)).